We begin with the raw amino-acid sequence, 586 residues long: MSPNPQWDVPRALRVARLFHLVCGVRDACVTPFLTLYLRQLGVAAPLVGILMGTKHLIATCWIPFCAFLAKRYQKRRMFLTGSLLSSAGASLLMVLVPPVDRNLVNHFCNGSSRVATTILPLGVTQTVIMTPTQGSGAPNLPGSRHTRALDTSGFPNGSEGTFSGLQTYLVGSVEGARTTTQGLHLVTSGLRDNSQKGTFEVGNVTLNLLPGSTALGGPVNLSKPQGDTQTPDHSSKGSPWTFILSLGVVVFWELLAAPLEQVADDSLYEYLDFVDATDRNRDLWVWKLLGVSAGVCGIAALVGHLECLLVANGPQGVIYFYSYSLVSTLALAVSTAFPVPIDQQQGPSYKAIKALSLIRGDSRLILLAFTVFWIGATASTVQDFLFWHMKDHGSSELVMGFSVALSLLGEILFHPFRTSLLRKLSRVGVLGLGLGCLALQVLYYAFIWSWWSVLPVQILSTISSGALWWAVGASIEDLAFSGMERSLGTMFRGHFYGSGCSLGSFVGGFVVLHFGIAVLYEACCVVLLLWLALFLSIQPRLPQEQRINYSKLLAMGGSDSSDSEQGSEGDWLVKAMREEHSDWKG.

The next 2 helical transmembrane spans lie at Ile-50 to Ala-70 and Met-78 to Pro-98. Residues Gly-218–Lys-237 form a disordered region. Positions Ser-223–Lys-237 are enriched in polar residues. The next 9 helical transmembrane spans lie at Pro-240–Leu-260, Leu-284–Gly-304, Val-318–Phe-338, Leu-365–Phe-385, Glu-397–Phe-417, Val-428–Ile-448, Val-454–Ala-474, Gly-494–His-514, and Val-519–Ile-538.

The protein belongs to the major facilitator superfamily. MFSD6 family.

Its subcellular location is the membrane. In Mus musculus (Mouse), this protein is Major facilitator superfamily domain-containing protein 6-like (Mfsd6l).